Consider the following 1323-residue polypeptide: Sister chromatid cohesion protein PDS5 homolog A-A (1323 aa).

The HEAT repeat unit spans residues 385–421; sequence FLVNDQLLGFVRERTLDKRWRVRKEAMMGLAQLYKKY. Positions 1139-1323 are disordered; it reads LNATGRRPYS…TAQRQIDLHR (185 aa). Residues 1153–1165 are compositionally biased toward low complexity; the sequence is SEISNNVSINSES. 2 stretches are compositionally biased toward polar residues: residues 1166–1176 and 1210–1220; these read DASVANRQSSE and LDQTAPSNTGT. A compositionally biased stretch (basic and acidic residues) spans 1235–1246; sequence NIRKESEEKKAD.

In terms of assembly, interacts with the cohesin complex. Binds chromatin in a cohesin-dependent manner.

It is found in the nucleus. In terms of biological role, may regulate sister chromatid cohesion during mitosis and couple it to DNA replication. The protein is Sister chromatid cohesion protein PDS5 homolog A-A (pds5a-a) of Xenopus laevis (African clawed frog).